Here is a 198-residue protein sequence, read N- to C-terminus: Cell division protein SepF (198 aa).

A disordered region spans residues 170 to 198 (EVPQPPARPARPASTNPPAWGNETNRMAQ). Residues 179 to 188 (ARPASTNPPA) show a composition bias toward low complexity.

It belongs to the SepF family. As to quaternary structure, homodimer. Interacts with FtsZ.

The protein localises to the cytoplasm. Cell division protein that is part of the divisome complex and is recruited early to the Z-ring. Probably stimulates Z-ring formation, perhaps through the cross-linking of FtsZ protofilaments. Its function overlaps with FtsA. This chain is Cell division protein SepF, found in Trichormus variabilis (strain ATCC 29413 / PCC 7937) (Anabaena variabilis).